A 229-amino-acid chain; its full sequence is 7-cyano-7-deazaguanine synthase (229 aa).

An ATP-binding site is contributed by 9-19 (YSGGLDSTTCM). The Zn(2+) site is built by cysteine 189, cysteine 199, cysteine 202, and cysteine 205.

Belongs to the QueC family. It depends on Zn(2+) as a cofactor.

The catalysed reaction is 7-carboxy-7-deazaguanine + NH4(+) + ATP = 7-cyano-7-deazaguanine + ADP + phosphate + H2O + H(+). It participates in purine metabolism; 7-cyano-7-deazaguanine biosynthesis. In terms of biological role, catalyzes the ATP-dependent conversion of 7-carboxy-7-deazaguanine (CDG) to 7-cyano-7-deazaguanine (preQ(0)). This chain is 7-cyano-7-deazaguanine synthase, found in Geotalea daltonii (strain DSM 22248 / JCM 15807 / FRC-32) (Geobacter daltonii).